Here is a 679-residue protein sequence, read N- to C-terminus: Methionine--tRNA ligase (679 aa).

The short motif at 14-24 is the 'HIGH' region element; sequence PYANGSIHLGH. Zn(2+) is bound by residues Cys145, Cys148, Cys158, and Cys161. The short motif at 331 to 335 is the 'KMSKS' region element; it reads KMSKS. ATP is bound at residue Lys334. The tRNA-binding domain occupies 577–679; it reads TFAAVDLRVA…SGAKPGQRIK (103 aa).

This sequence belongs to the class-I aminoacyl-tRNA synthetase family. MetG type 1 subfamily. As to quaternary structure, homodimer. The cofactor is Zn(2+).

It localises to the cytoplasm. The enzyme catalyses tRNA(Met) + L-methionine + ATP = L-methionyl-tRNA(Met) + AMP + diphosphate. In terms of biological role, is required not only for elongation of protein synthesis but also for the initiation of all mRNA translation through initiator tRNA(fMet) aminoacylation. This chain is Methionine--tRNA ligase, found in Pseudomonas entomophila (strain L48).